The sequence spans 138 residues: Putative nickel-responsive regulator (138 aa).

Positions 76, 87, 89, and 95 each coordinate Ni(2+).

Belongs to the transcriptional regulatory CopG/NikR family. Ni(2+) is required as a cofactor.

Its function is as follows. Transcriptional regulator. This is Putative nickel-responsive regulator from Pseudomonas putida (strain ATCC 47054 / DSM 6125 / CFBP 8728 / NCIMB 11950 / KT2440).